The primary structure comprises 120 residues: NAD(P)H-quinone oxidoreductase subunit 3, chloroplastic (120 aa).

3 helical membrane passes run leucine 10 to isoleucine 30, methionine 64 to isoleucine 84, and leucine 89 to valine 109.

This sequence belongs to the complex I subunit 3 family. As to quaternary structure, NDH is composed of at least 16 different subunits, 5 of which are encoded in the nucleus.

It localises to the plastid. The protein resides in the chloroplast thylakoid membrane. It carries out the reaction a plastoquinone + NADH + (n+1) H(+)(in) = a plastoquinol + NAD(+) + n H(+)(out). It catalyses the reaction a plastoquinone + NADPH + (n+1) H(+)(in) = a plastoquinol + NADP(+) + n H(+)(out). NDH shuttles electrons from NAD(P)H:plastoquinone, via FMN and iron-sulfur (Fe-S) centers, to quinones in the photosynthetic chain and possibly in a chloroplast respiratory chain. The immediate electron acceptor for the enzyme in this species is believed to be plastoquinone. Couples the redox reaction to proton translocation, and thus conserves the redox energy in a proton gradient. This Chara vulgaris (Common stonewort) protein is NAD(P)H-quinone oxidoreductase subunit 3, chloroplastic.